The chain runs to 244 residues: tRNA (guanine-N(1)-)-methyltransferase (244 aa).

Residues Gly120 and 140-145 (IGDYIL) contribute to the S-adenosyl-L-methionine site.

It belongs to the RNA methyltransferase TrmD family. As to quaternary structure, homodimer.

It localises to the cytoplasm. It catalyses the reaction guanosine(37) in tRNA + S-adenosyl-L-methionine = N(1)-methylguanosine(37) in tRNA + S-adenosyl-L-homocysteine + H(+). Its function is as follows. Specifically methylates guanosine-37 in various tRNAs. This chain is tRNA (guanine-N(1)-)-methyltransferase, found in Brucella abortus (strain S19).